The sequence spans 358 residues: Dual-specificity RNA methyltransferase RlmN (358 aa).

Glu-91 acts as the Proton acceptor in catalysis. The region spanning 102-337 is the Radical SAM core domain; sequence GNIRITQCLS…TILRKSKGQD (236 aa). A disulfide bond links Cys-109 and Cys-342. [4Fe-4S] cluster is bound by residues Cys-116, Cys-120, and Cys-123. Residues 169–170, Ser-201, 223–225, and Asn-299 each bind S-adenosyl-L-methionine; these read GE and SLH. The active-site S-methylcysteine intermediate is the Cys-342.

Belongs to the radical SAM superfamily. RlmN family. The cofactor is [4Fe-4S] cluster.

It localises to the cytoplasm. It carries out the reaction adenosine(2503) in 23S rRNA + 2 reduced [2Fe-2S]-[ferredoxin] + 2 S-adenosyl-L-methionine = 2-methyladenosine(2503) in 23S rRNA + 5'-deoxyadenosine + L-methionine + 2 oxidized [2Fe-2S]-[ferredoxin] + S-adenosyl-L-homocysteine. The catalysed reaction is adenosine(37) in tRNA + 2 reduced [2Fe-2S]-[ferredoxin] + 2 S-adenosyl-L-methionine = 2-methyladenosine(37) in tRNA + 5'-deoxyadenosine + L-methionine + 2 oxidized [2Fe-2S]-[ferredoxin] + S-adenosyl-L-homocysteine. Specifically methylates position 2 of adenine 2503 in 23S rRNA and position 2 of adenine 37 in tRNAs. m2A2503 modification seems to play a crucial role in the proofreading step occurring at the peptidyl transferase center and thus would serve to optimize ribosomal fidelity. This chain is Dual-specificity RNA methyltransferase RlmN, found in Lawsonia intracellularis (strain PHE/MN1-00).